Here is a 663-residue protein sequence, read N- to C-terminus: Telomere length regulator taz1 (663 aa).

The interval E15–P72 is disordered. Polar residues-rich tracts occupy residues V27–L43 and E54–S67. The residue at position 332 (S332) is a Phosphoserine. Disordered regions lie at residues G389 to E412 and R471 to G554. 2 stretches are compositionally biased toward basic and acidic residues: residues K489 to A498 and P512 to S524. Residues R556 to R612 enclose the Myb-like domain.

Interacts with taf1 via the Myb domain, and ccq1.

Its subcellular location is the cytoplasm. The protein resides in the nucleus. The protein localises to the chromosome. It localises to the telomere. In terms of biological role, regulates telomere length and function. Required for the repression of telomere-adjacent gene expression and for normal meiosis or sporulation. It may be a negative regulator of the telomere-replicating enzyme, telomerase, or may protect against activation of telomerase-independent pathways of telomere elongation. It may be involved in the interactions between chromosomes and spindle proteins, disruption of these interactions would lead to defective meiosis. This is Telomere length regulator taz1 (taz1) from Schizosaccharomyces pombe (strain 972 / ATCC 24843) (Fission yeast).